The chain runs to 470 residues: UDP-glycosyltransferase 91A1 (470 aa).

Residues Ser-290, 350 to 352 (VEQ), 367 to 375 (HPGWGTIIE), and 389 to 392 (VYDQ) contribute to the UDP-alpha-D-glucose site.

The protein belongs to the UDP-glycosyltransferase family.

This chain is UDP-glycosyltransferase 91A1 (UGT91A1), found in Arabidopsis thaliana (Mouse-ear cress).